The chain runs to 221 residues: MRLILLGAPGAGKGTQANFIKEKFGIPQISTGDMLRAAVKAGTPLGLEAKRYMDAGELVTDELIINLVKERLQDSDCANGYLFDGFPRTIPQAEAMKQAGVAIDYVLEIDVPFDEIITRMSGRRMHPASGRTYHVKFNPPKVEGVDDVTGEPLIQRDDDKEETVKKRLDVYVSQTKPLIDYYNNWAQKGDPSTSLAAPQYRRISGLGSVDEIRARVFDALK.

Position 10-15 (10-15 (GAGKGT)) interacts with ATP. The tract at residues 30–59 (STGDMLRAAVKAGTPLGLEAKRYMDAGELV) is NMP. AMP-binding positions include threonine 31, arginine 36, 57-59 (ELV), 85-88 (GFPR), and glutamine 92. An LID region spans residues 122–159 (GRRMHPASGRTYHVKFNPPKVEGVDDVTGEPLIQRDDD). Residues arginine 123 and 132 to 133 (TY) each bind ATP. Residues arginine 156 and arginine 167 each contribute to the AMP site. Glycine 207 serves as a coordination point for ATP.

The protein belongs to the adenylate kinase family. Monomer.

It localises to the cytoplasm. The catalysed reaction is AMP + ATP = 2 ADP. It functions in the pathway purine metabolism; AMP biosynthesis via salvage pathway; AMP from ADP: step 1/1. Catalyzes the reversible transfer of the terminal phosphate group between ATP and AMP. Plays an important role in cellular energy homeostasis and in adenine nucleotide metabolism. The sequence is that of Adenylate kinase from Paraburkholderia phymatum (strain DSM 17167 / CIP 108236 / LMG 21445 / STM815) (Burkholderia phymatum).